Consider the following 152-residue polypeptide: Large ribosomal subunit protein bL9 (152 aa).

Belongs to the bacterial ribosomal protein bL9 family.

Functionally, binds to the 23S rRNA. The polypeptide is Large ribosomal subunit protein bL9 (Picosynechococcus sp. (strain ATCC 27264 / PCC 7002 / PR-6) (Agmenellum quadruplicatum)).